A 397-amino-acid chain; its full sequence is Teichoic acid D-alanine hydrolase (397 aa).

The first 23 residues, 1-23 (MKFNKVKLVIHACVLLFIIISIA), serve as a signal peptide directing secretion.

The protein resides in the cell membrane. It carries out the reaction [(4-D-Ala)-(2-GlcNAc)-Rib-ol-P]n-[Gro-P]m-beta-D-ManNAc-(1-&gt;4)-alpha-D-GlcNAc-P-peptidoglycan + n H2O = [(2-GlcNAc)-Rib-ol-P]n-[Gro-P]m-beta-D-ManNAc-(1-&gt;4)-alpha-D-GlcNAc-P-peptidoglycan + n D-alanine.. Functionally, catalyzes the liberation of D-alanyl moieties present on wall teichoic acid (WTA) and lipoteichoic acid (LTA). Affects the methicillin resistance level and autolysis in the presence of Triton X-100 as well as the cell wall structure. In Staphylococcus aureus (strain Mu50 / ATCC 700699), this protein is Teichoic acid D-alanine hydrolase (fmtA).